A 297-amino-acid polypeptide reads, in one-letter code: Polyhedral envelope protein (297 aa).

Belongs to the baculoviridae PE family.

It localises to the virion membrane. Functionally, major component of the polyhedra envelope. The sequence is that of Polyhedral envelope protein from Orgyia pseudotsugata (Douglas-fir tussock moth).